We begin with the raw amino-acid sequence, 502 residues long: Probable cytosol aminopeptidase (502 aa).

Lys-269 and Asp-274 together coordinate Mn(2+). Lys-281 is an active-site residue. Mn(2+) is bound by residues Asp-292, Asp-351, and Glu-353. The active site involves Arg-355.

It belongs to the peptidase M17 family. Mn(2+) is required as a cofactor.

It localises to the cytoplasm. The catalysed reaction is Release of an N-terminal amino acid, Xaa-|-Yaa-, in which Xaa is preferably Leu, but may be other amino acids including Pro although not Arg or Lys, and Yaa may be Pro. Amino acid amides and methyl esters are also readily hydrolyzed, but rates on arylamides are exceedingly low.. It carries out the reaction Release of an N-terminal amino acid, preferentially leucine, but not glutamic or aspartic acids.. Functionally, presumably involved in the processing and regular turnover of intracellular proteins. Catalyzes the removal of unsubstituted N-terminal amino acids from various peptides. This is Probable cytosol aminopeptidase from Aliivibrio fischeri (strain MJ11) (Vibrio fischeri).